The following is a 310-amino-acid chain: NAD kinase 1 (310 aa).

The active-site Proton acceptor is D68. Residues 68 to 69, 145 to 146, R156, H175, and D177 contribute to the NAD(+) site; these read DG and NE.

This sequence belongs to the NAD kinase family. A divalent metal cation serves as cofactor.

The protein localises to the cytoplasm. The enzyme catalyses NAD(+) + ATP = ADP + NADP(+) + H(+). Its function is as follows. Involved in the regulation of the intracellular balance of NAD and NADP, and is a key enzyme in the biosynthesis of NADP. Catalyzes specifically the phosphorylation on 2'-hydroxyl of the adenosine moiety of NAD to yield NADP. This is NAD kinase 1 from Gloeobacter violaceus (strain ATCC 29082 / PCC 7421).